A 536-amino-acid chain; its full sequence is Heparanase (536 aa).

An N-terminal signal peptide occupies residues 1-28 (MLRPLLLLWLWGRLGALTQGTPAGTAPT). Heparan sulfate group contacts are provided by residues 55 to 57 (DAS) and Thr-90. Positions 103-150 (PTSEERSYWQSQDNNDICGSERVSADVLRKLQMEWPFQELLLLREQYQ) are cleaved as a propeptide — linker peptide. A disulfide bridge links Cys-120 with Cys-172. 151–155 (REFKN) provides a ligand contact to heparan sulfate group. 3 N-linked (GlcNAc...) asparagine glycosylation sites follow: Asn-155, Asn-193, and Asn-210. Residue Glu-218 is the Proton donor of the active site. Heparan sulfate group contacts are provided by residues 263–273 (QPRGKTVKLLR), His-289, and Arg-296. The tract at residues 281–410 (EVIDSLTWHH…LLFKKLVGPK (130 aa)) is required for heterodimerization with the heparanase 8 kDa subunit. Glu-336 (nucleophile) is an active-site residue. Heparan sulfate group-binding positions include 341-343 (YGG) and 382-384 (GNY). Cys-430 and Cys-535 are disulfide-bonded. N-linked (GlcNAc...) asparagine glycosylation occurs at Asn-452. The segment at 520–536 (FSYGFFVIRNAKIAACI) is required for transferring proheparanase to the Golgi apparatus, secretion and subsequent enzyme activity and for enhancement of PKB/AKT1 phosphorylation.

The protein belongs to the glycosyl hydrolase 79 family. Heterodimer; heterodimer formation between the 8 kDa and the 50 kDa subunits is required for enzyme activity. Interacts with TF; the interaction, inhibited by heparin, enhances the generation of activated factor X and activates coagulation. Interacts with HRG; the interaction is enhanced at acidic pH, partially inhibits binding of HPSE to cell surface receptors and modulates its enzymatic activity. Interacts with SDC1; the interaction enhances the shedding of SDC1. Interacts with HPSE2. Proteolytically processed. The cleavage of the 65 kDa form leads to the generation of a linker peptide, and the 8 kDa and 50 kDa products. The active form, the 8/50 kDa heterodimer, is resistant to degradation. Complete removal of the linker peptide appears to be a prerequisite to the complete activation of the enzyme. In terms of processing, N-glycosylated. Glycosylation of the 50 kDa subunit appears to be essential for its solubility.

It is found in the lysosome membrane. It localises to the secreted. The protein localises to the nucleus. The enzyme catalyses endohydrolysis of (1-&gt;4)-beta-D-glycosidic bonds of heparan sulfate chains in heparan sulfate proteoglycan.. Its activity is regulated as follows. Inhibited by laminarin sulfate and, to a lower extent, by heparin and sulfamin. Activated by calcium and magnesium. Inhibited by EDTA. In terms of biological role, endoglycosidase that cleaves heparan sulfate proteoglycans (HSPGs) into heparan sulfate side chains and core proteoglycans. Participates in extracellular matrix (ECM) degradation and remodeling. Selectively cleaves the linkage between a glucuronic acid unit and an N-sulfo glucosamine unit carrying either a 3-O-sulfo or a 6-O-sulfo group. Can also cleave the linkage between a glucuronic acid unit and an N-sulfo glucosamine unit carrying a 2-O-sulfo group, but not linkages between a glucuronic acid unit and a 2-O-sulfated iduronic acid moiety. It is essentially inactive at neutral pH but becomes active under acidic conditions such as during tumor invasion and in inflammatory processes. Facilitates cell migration associated with metastasis, wound healing and inflammation. Enhances shedding of syndecans, and increases endothelial invasion and angiogenesis in myelomas. Acts as a procoagulant by increasing the generation of activation factor X in the presence of tissue factor and activation factor VII. Increases cell adhesion to the extracellular matrix (ECM), independent of its enzymatic activity. Induces AKT1/PKB phosphorylation via lipid rafts increasing cell mobility and invasion. Heparin increases this AKT1/PKB activation. Regulates osteogenesis. Enhances angiogenesis through up-regulation of SRC-mediated activation of VEGF. Implicated in hair follicle inner root sheath differentiation and hair homeostasis. This is Heparanase (Hpse) from Rattus norvegicus (Rat).